Here is a 93-residue protein sequence, read N- to C-terminus: MIRSELIQKIADENPHLTQRHVERIVNTVFEEIIEALARGDRVELRGFGAFSVKARDARVGRNPRTGEAVEVEDKKVPFFKTGKLLRDRLNAK.

It belongs to the bacterial histone-like protein family. Heterodimer of an alpha and a beta chain.

This protein is one of the two subunits of integration host factor, a specific DNA-binding protein that functions in genetic recombination as well as in transcriptional and translational control. This Cereibacter sphaeroides (strain ATCC 17023 / DSM 158 / JCM 6121 / CCUG 31486 / LMG 2827 / NBRC 12203 / NCIMB 8253 / ATH 2.4.1.) (Rhodobacter sphaeroides) protein is Integration host factor subunit beta (ihfB).